The primary structure comprises 225 residues: Ribonuclease 3 (225 aa).

The RNase III domain occupies 5-127; sequence LDRLQRSLGH…VFAATFLDQG (123 aa). Residue glutamate 40 participates in Mg(2+) binding. The active site involves aspartate 44. Residues aspartate 113 and glutamate 116 each coordinate Mg(2+). Glutamate 116 is an active-site residue. The region spanning 154–224 is the DRBM domain; that stretch reads DPKTALQELL…AELALAQLRK (71 aa).

Belongs to the ribonuclease III family. In terms of assembly, homodimer. Mg(2+) is required as a cofactor.

It localises to the cytoplasm. It carries out the reaction Endonucleolytic cleavage to 5'-phosphomonoester.. In terms of biological role, digests double-stranded RNA. Involved in the processing of primary rRNA transcript to yield the immediate precursors to the large and small rRNAs (23S and 16S). Processes some mRNAs, and tRNAs when they are encoded in the rRNA operon. Processes pre-crRNA and tracrRNA of type II CRISPR loci if present in the organism. The chain is Ribonuclease 3 from Aromatoleum aromaticum (strain DSM 19018 / LMG 30748 / EbN1) (Azoarcus sp. (strain EbN1)).